Reading from the N-terminus, the 945-residue chain is Netrin receptor UNC5B (945 aa).

The signal sequence occupies residues 1–26 (MRARSGARGALLLALLLCWDPTPSLA). Over 27–377 (GIDSGGQALP…LEPSGDVALY (351 aa)) the chain is Extracellular. In terms of domain architecture, Ig-like spans 48 to 145 (PHFLLEPEDA…SGTTKSRRAY (98 aa)). Intrachain disulfides connect cysteine 69-cysteine 130, cysteine 81-cysteine 128, cysteine 174-cysteine 225, cysteine 258-cysteine 295, cysteine 262-cysteine 299, cysteine 273-cysteine 285, cysteine 314-cysteine 348, cysteine 318-cysteine 353, and cysteine 326-cysteine 338. Residues 153–242 (KNFDQEPLAK…KRRSTTATVI (90 aa)) form the Ig-like C2-type domain. The N-linked (GlcNAc...) asparagine glycan is linked to asparagine 222. TSP type-1 domains lie at 246-300 (NGGW…TVCP) and 302-354 (DGAW…GLCV). Asparagine 347 is a glycosylation site (N-linked (GlcNAc...) asparagine). Residues 378 to 398 (AGLVVAVFVVLAVLMAVGVIV) form a helical membrane-spanning segment. Over 399–945 (YRRNCRDFDT…LVAMTTDGDC (547 aa)) the chain is Cytoplasmic. Residue cysteine 403 is the site of S-palmitoyl cysteine attachment. The 144-residue stretch at 543-686 (SSVSGTFGCL…LGTYVFTGES (144 aa)) folds into the ZU5 domain. Phosphotyrosine is present on tyrosine 581. Residues 689 to 838 (RSAVKRLQLA…AETPAGSLDA (150 aa)) are UPA domain. Residues 707–725 (SLEYSLRVYCLEDTPAALK) form an interaction with DCC region. Residues 865–943 (KICNSLDAPN…EMLVAMTTDG (79 aa)) form the Death domain.

Belongs to the unc-5 family. As to quaternary structure, interacts with the cytoplasmic part of DCC. Interacts with GNAI2 via its cytoplasmic part. Interacts (via death domain) with DAPK1 (via death domain). Interacts (via extracellular domain) with FLRT3 (via extracellular domain); the interaction is direct. Interacts (via extracellular domain) with FLRT2 and FLRT3 (via extracellular domain), but has higher affinity for FLRT3. Identified in a complex with FLRT3 and ADGRL3; does not interact with ADGRL3 by itself. In terms of processing, phosphorylated on cytoplasmic tyrosine residues. Post-translationally, proteolytically cleaved by caspases during apoptosis. The cleavage does not take place when the receptor is associated with netrin ligand. Its cleavage by caspases is required to induce apoptosis. Palmitoylation is required for pro-apoptotic activity, but not for location at lipid rafts. As to expression, mainly expressed in regions of differentiating neurons. Expressed in the developing sensory ganglia that flank the spinal cord from E12, peaking at E14. Expressed in the roof plate region of the spinal cord from E14.

It localises to the cell membrane. The protein resides in the membrane raft. Its function is as follows. Receptor for netrin required for axon guidance. Mediates axon repulsion of neuronal growth cones in the developing nervous system upon ligand binding. Axon repulsion in growth cones may be caused by its association with DCC that may trigger signaling for repulsion. Functions as a netrin receptor that negatively regulates vascular branching during angiogenesis. Mediates retraction of tip cell filopodia on endothelial growth cones in response to netrin. It also acts as a dependence receptor required for apoptosis induction when not associated with netrin ligand. Mediates apoptosis by activating DAPK1. In the absence of NTN1, activates DAPK1 by reducing its autoinhibitory phosphorylation at Ser-308 thereby increasing its catalytic activity. This chain is Netrin receptor UNC5B (Unc5b), found in Rattus norvegicus (Rat).